The chain runs to 116 residues: Aspartate 1-decarboxylase (116 aa).

The Schiff-base intermediate with substrate; via pyruvic acid role is filled by S25. S25 carries the post-translational modification Pyruvic acid (Ser). T57 lines the substrate pocket. The Proton donor role is filled by Y58. 72–74 contacts substrate; that stretch reads GAA.

Belongs to the PanD family. As to quaternary structure, heterooctamer of four alpha and four beta subunits. Requires pyruvate as cofactor. In terms of processing, is synthesized initially as an inactive proenzyme, which is activated by self-cleavage at a specific serine bond to produce a beta-subunit with a hydroxyl group at its C-terminus and an alpha-subunit with a pyruvoyl group at its N-terminus.

It is found in the cytoplasm. The enzyme catalyses L-aspartate + H(+) = beta-alanine + CO2. Its pathway is cofactor biosynthesis; (R)-pantothenate biosynthesis; beta-alanine from L-aspartate: step 1/1. Functionally, catalyzes the pyruvoyl-dependent decarboxylation of aspartate to produce beta-alanine. The protein is Aspartate 1-decarboxylase of Helicobacter pylori (strain HPAG1).